A 200-amino-acid polypeptide reads, in one-letter code: Holliday junction resolvase RecU (200 aa).

The interval 1–25 (MTIRYPNGKRYNQASQPQKTPIKTH) is disordered. The span at 10–25 (RYNQASQPQKTPIKTH) shows a compositional bias: polar residues. 4 residues coordinate Mg(2+): Thr-85, Asp-87, Glu-100, and Gln-119.

It belongs to the RecU family. Mg(2+) serves as cofactor.

The protein localises to the cytoplasm. The catalysed reaction is Endonucleolytic cleavage at a junction such as a reciprocal single-stranded crossover between two homologous DNA duplexes (Holliday junction).. Functionally, endonuclease that resolves Holliday junction intermediates in genetic recombination. Cleaves mobile four-strand junctions by introducing symmetrical nicks in paired strands. Promotes annealing of linear ssDNA with homologous dsDNA. Required for DNA repair, homologous recombination and chromosome segregation. This Bacillus cereus (strain G9842) protein is Holliday junction resolvase RecU.